A 234-amino-acid polypeptide reads, in one-letter code: Leucyl/phenylalanyl-tRNA--protein transferase (234 aa).

This sequence belongs to the L/F-transferase family.

It localises to the cytoplasm. It catalyses the reaction N-terminal L-lysyl-[protein] + L-leucyl-tRNA(Leu) = N-terminal L-leucyl-L-lysyl-[protein] + tRNA(Leu) + H(+). It carries out the reaction N-terminal L-arginyl-[protein] + L-leucyl-tRNA(Leu) = N-terminal L-leucyl-L-arginyl-[protein] + tRNA(Leu) + H(+). The catalysed reaction is L-phenylalanyl-tRNA(Phe) + an N-terminal L-alpha-aminoacyl-[protein] = an N-terminal L-phenylalanyl-L-alpha-aminoacyl-[protein] + tRNA(Phe). Functionally, functions in the N-end rule pathway of protein degradation where it conjugates Leu, Phe and, less efficiently, Met from aminoacyl-tRNAs to the N-termini of proteins containing an N-terminal arginine or lysine. This is Leucyl/phenylalanyl-tRNA--protein transferase from Escherichia coli O81 (strain ED1a).